A 98-amino-acid polypeptide reads, in one-letter code: Complement inhibitor RaCI1 (98 aa).

An N-terminal signal peptide occupies residues 1–20 (MNAMLVLFIASALFISEHNT). 3 disulfides stabilise this stretch: C33–C57, C38–C59, and C53–C74. A disordered region spans residues 79-98 (TTKPPMAPGDNKDNKEEESN). The span at 88–98 (DNKDNKEEESN) shows a compositional bias: basic and acidic residues.

Belongs to the RaCI family. As to expression, expressed in salivary glands.

It localises to the secreted. Functionally, complement inhibitor. Prevents complement-mediated C5 activation by binding to C5. Binds C5 at a different binding site than the other tick complement inhibitors OmCI and CirpT1, and the drug eculizumab. Inhibits the complement in human and guinea pig but not in other species tested (rabbit, rat, mouse, and pig). In Rhipicephalus appendiculatus (Brown ear tick), this protein is Complement inhibitor RaCI1.